A 144-amino-acid polypeptide reads, in one-letter code: Phospholipase A2, membrane associated (144 aa).

The N-terminal stretch at 1–20 (MKTLLLLAVIMIFGLLQAHG) is a signal peptide. 7 cysteine pairs are disulfide-bonded: C46–C137, C48–C64, C63–C117, C69–C144, C70–C110, C79–C103, and C97–C108. Residues H47, G49, and G51 each contribute to the Ca(2+) site. H67 is a catalytic residue. D68 serves as a coordination point for Ca(2+). The active site involves D111.

It belongs to the phospholipase A2 family. Ca(2+) is required as a cofactor. In terms of tissue distribution, expressed in various tissues including heart, kidney, liver, lung, pancreas, placenta, skeletal muscle, prostate, ovary, colon and small intestine. Not detected in lymphoid organs and brain. Expressed in platelets (at protein level).

It is found in the secreted. The protein localises to the cell membrane. The protein resides in the mitochondrion outer membrane. It carries out the reaction a 1,2-diacyl-sn-glycero-3-phosphoethanolamine + H2O = a 1-acyl-sn-glycero-3-phosphoethanolamine + a fatty acid + H(+). The catalysed reaction is 1-hexadecanoyl-2-(9Z-octadecenoyl)-sn-glycero-3-phosphoethanolamine + H2O = 1-hexadecanoyl-sn-glycero-3-phosphoethanolamine + (9Z)-octadecenoate + H(+). It catalyses the reaction 1-hexadecanoyl-2-(9Z,12Z-octadecadienoyl)-sn-glycero-3-phosphoethanolamine + H2O = 1-hexadecanoyl-sn-glycero-3-phosphoethanolamine + (9Z,12Z)-octadecadienoate + H(+). The enzyme catalyses 1-hexadecanoyl-2-(5Z,8Z,11Z,14Z-eicosatetraenoyl)-sn-glycero-3-phosphoethanolamine + H2O = 1-hexadecanoyl-sn-glycero-3-phosphoethanolamine + (5Z,8Z,11Z,14Z)-eicosatetraenoate + H(+). It carries out the reaction N-hexadecanoyl-1,2-di-(9Z-octadecenoyl)-sn-glycero-3-phosphoethanolamine + H2O = N-hexadecanoyl-1-(9Z-octadecenoyl)-sn-glycero-3-phosphoethanolamine + (9Z)-octadecenoate + H(+). The catalysed reaction is 1,2-dihexadecanoyl-sn-glycero-3-phospho-(1'-sn-glycerol) + H2O = 1-hexadecanoyl-sn-glycero-3-phospho-(1'-sn-glycerol) + hexadecanoate + H(+). It catalyses the reaction 1-hexadecanoyl-2-(9Z-octadecenoyl)-sn-glycero-3-phosphoglycerol + H2O = 1-hexadecanoyl-sn-glycero-3-phosphoglycerol + (9Z)-octadecenoate + H(+). The enzyme catalyses 1-hexadecanoyl-2-(9Z-octadecenoyl)-sn-glycero-3-phospho-(1'-sn-glycerol) + H2O = 1-hexadecanoyl-sn-glycero-3-phospho-(1'-sn-glycerol) + (9Z)-octadecenoate + H(+). It carries out the reaction a 1,2-diacyl-sn-glycero-3-phosphocholine + H2O = a 1-acyl-sn-glycero-3-phosphocholine + a fatty acid + H(+). The catalysed reaction is 1,2-dihexadecanoyl-sn-glycero-3-phosphocholine + H2O = 1-hexadecanoyl-sn-glycero-3-phosphocholine + hexadecanoate + H(+). It catalyses the reaction 1-hexadecanoyl-2-(9Z-octadecenoyl)-sn-glycero-3-phosphocholine + H2O = 1-hexadecanoyl-sn-glycero-3-phosphocholine + (9Z)-octadecenoate + H(+). The enzyme catalyses 1-hexadecanoyl-2-(9Z,12Z-octadecadienoyl)-sn-glycero-3-phosphocholine + H2O = (9Z,12Z)-octadecadienoate + 1-hexadecanoyl-sn-glycero-3-phosphocholine + H(+). It carries out the reaction 1-hexadecanoyl-2-(4Z,7Z,10Z,13Z,16Z,19Z-docosahexaenoyl)-sn-glycero-3-phosphocholine + H2O = (4Z,7Z,10Z,13Z,16Z,19Z)-docosahexaenoate + 1-hexadecanoyl-sn-glycero-3-phosphocholine + H(+). Secretory calcium-dependent phospholipase A2 that primarily targets extracellular phospholipids with implications in host antimicrobial defense, inflammatory response and tissue regeneration. Hydrolyzes the ester bond of the fatty acyl group attached at sn-2 position of phospholipids (phospholipase A2 activity) with preference for phosphatidylethanolamines and phosphatidylglycerols over phosphatidylcholines. Contributes to lipid remodeling of cellular membranes and generation of lipid mediators involved in pathogen clearance. Displays bactericidal activity against Gram-positive bacteria by directly hydrolyzing phospholipids of the bacterial membrane. Upon sterile inflammation, targets membrane phospholipids of extracellular mitochondria released from activated platelets, generating free unsaturated fatty acids such as arachidonate that is used by neighboring leukocytes to synthesize inflammatory eicosanoids such as leukotrienes. Simultaneously, by compromising mitochondrial membrane integrity, promotes the release in circulation of potent damage-associated molecular pattern molecules that activate the innate immune response. Plays a stem cell regulator role in the intestinal crypt. Within intracellular compartment mediates Paneth cell differentiation and its stem cell supporting functions by inhibiting Wnt signaling pathway in intestinal stem cell (ICS). Secreted in the intestinal lumen upon inflammation, acts in an autocrine way and promotes prostaglandin E2 synthesis that stimulates Wnt signaling pathway in ICS cells and tissue regeneration. May play a role in the biosynthesis of N-acyl ethanolamines that regulate energy metabolism and inflammation. Hydrolyzes N-acyl phosphatidylethanolamines to N-acyl lysophosphatidylethanolamines, which are further cleaved by a lysophospholipase D to release N-acyl ethanolamines. Independent of its catalytic activity, acts as a ligand for integrins. Binds to and activates integrins ITGAV:ITGB3, ITGA4:ITGB1 and ITGA5:ITGB1. Binds to a site (site 2) which is distinct from the classical ligand-binding site (site 1) and induces integrin conformational changes and enhanced ligand binding to site 1. Induces cell proliferation in an integrin-dependent manner. The protein is Phospholipase A2, membrane associated (PLA2G2A) of Homo sapiens (Human).